Reading from the N-terminus, the 185-residue chain is Adenine phosphoribosyltransferase (185 aa).

It belongs to the purine/pyrimidine phosphoribosyltransferase family. In terms of assembly, homodimer.

The protein resides in the cytoplasm. The enzyme catalyses AMP + diphosphate = 5-phospho-alpha-D-ribose 1-diphosphate + adenine. The protein operates within purine metabolism; AMP biosynthesis via salvage pathway; AMP from adenine: step 1/1. Its function is as follows. Catalyzes a salvage reaction resulting in the formation of AMP, that is energically less costly than de novo synthesis. In Nocardioides sp. (strain ATCC BAA-499 / JS614), this protein is Adenine phosphoribosyltransferase.